Reading from the N-terminus, the 331-residue chain is Glyceraldehyde-3-phosphate dehydrogenase, cytosolic (331 aa).

Residues 12-13 (RI), Asp34, and Arg78 contribute to the NAD(+) site. D-glyceraldehyde 3-phosphate-binding positions include 149–151 (SCT), Thr180, 209–210 (TG), and Arg232. The active-site Nucleophile is Cys150. Residue Asn314 participates in NAD(+) binding.

This sequence belongs to the glyceraldehyde-3-phosphate dehydrogenase family. As to quaternary structure, homotetramer.

The protein localises to the cytoplasm. It catalyses the reaction D-glyceraldehyde 3-phosphate + phosphate + NAD(+) = (2R)-3-phospho-glyceroyl phosphate + NADH + H(+). It functions in the pathway carbohydrate degradation; glycolysis; pyruvate from D-glyceraldehyde 3-phosphate: step 1/5. The protein is Glyceraldehyde-3-phosphate dehydrogenase, cytosolic of Trypanosoma brucei brucei.